The sequence spans 610 residues: WD repeat-containing protein 46 (610 aa).

The disordered stretch occupies residues methionine 1–proline 103. The segment covering proline 7–glutamine 19 has biased composition (basic and acidic residues). Residue serine 41 is modified to Phosphoserine. Over residues lysine 65–lysine 77 the composition is skewed to basic residues. WD repeat units lie at residues leucine 193–asparagine 234, valine 235–isoleucine 272, arginine 274–alanine 312, alanine 315–lysine 354, cysteine 357–serine 396, and threonine 399–serine 436. A disordered region spans residues glutamate 538 to arginine 610. Residues valine 572–arginine 582 show a composition bias toward basic and acidic residues.

In terms of assembly, part of the small subunit (SSU) processome, composed of more than 70 proteins and the RNA chaperone small nucleolar RNA (snoRNA) U3. Interacts with DDX21, NCL, NOP2 and EBNA1BP2.

It localises to the nucleus. It is found in the nucleolus. Scaffold component of the nucleolar structure. Required for localization of DDX21 and NCL to the granular compartment of the nucleolus. Part of the small subunit (SSU) processome, first precursor of the small eukaryotic ribosomal subunit. During the assembly of the SSU processome in the nucleolus, many ribosome biogenesis factors, an RNA chaperone and ribosomal proteins associate with the nascent pre-rRNA and work in concert to generate RNA folding, modifications, rearrangements and cleavage as well as targeted degradation of pre-ribosomal RNA by the RNA exosome. The polypeptide is WD repeat-containing protein 46 (WDR46) (Homo sapiens (Human)).